We begin with the raw amino-acid sequence, 61 residues long: Large ribosomal subunit protein uL30 (61 aa).

This sequence belongs to the universal ribosomal protein uL30 family. As to quaternary structure, part of the 50S ribosomal subunit.

The protein is Large ribosomal subunit protein uL30 of Corynebacterium efficiens (strain DSM 44549 / YS-314 / AJ 12310 / JCM 11189 / NBRC 100395).